Reading from the N-terminus, the 500-residue chain is NF-kappa-B inhibitor epsilon (500 aa).

Basic and acidic residues predominate over residues 1–10; the sequence is MNQRRSESRP. Disordered stretches follow at residues 1–66, 84–215, and 222–241; these read MNQR…PAWA, LSSL…YGSS, and SLLG…LPHV. Phosphoserine is present on residues serine 157, serine 161, and serine 183. Over residues 161–186 the composition is skewed to low complexity; the sequence is SLRSLRSLPESTSAPASGPSDGSPQP. Residues 196–209 are compositionally biased toward basic and acidic residues; it reads EPQEKEDADGERAD. ANK repeat units follow at residues 258-291, 293-322, 326-355, 369-398, 403-432, and 436-465; these read DGDT…DIQN, LYQT…SRAL, HGDT…EPGR, QGLA…DIDV, SGKT…QVDA, and NGCT…DSLL.

It belongs to the NF-kappa-B inhibitor family. Interacts with RELA, REL, NFKB1 nuclear factor NF-kappa-B p50 subunit and NFKB2 nuclear factor NF-kappa-B p52 subunit. Interacts with HNRNPA2B1; the interaction may be mediated by the RRM2 domain of HNRNPA2B1, and HNRNPA2B1 may interact simultaneously with FAM76B and either NFKBIA or NFKBIE to form a complex. Post-translationally, serine phosphorylated; followed by proteasome-dependent degradation. In terms of tissue distribution, highly expressed in spleen, testis and lung, followed by kidney, pancreas, heart, placenta and brain. Also expressed in granulocytes and macrophages.

It localises to the cytoplasm. Its function is as follows. Sequesters NF-kappa-B transcription factor complexes in the cytoplasm, thereby inhibiting their activity. Sequestered complexes include NFKB1-RELA (p50-p65) and NFKB1-REL (p50-c-Rel) complexes. Limits B-cell activation in response to pathogens, and also plays an important role in B-cell development. This chain is NF-kappa-B inhibitor epsilon (NFKBIE), found in Homo sapiens (Human).